A 69-amino-acid chain; its full sequence is Large ribosomal subunit protein bL28 (69 aa).

It belongs to the bacterial ribosomal protein bL28 family.

This Lawsonia intracellularis (strain PHE/MN1-00) protein is Large ribosomal subunit protein bL28.